Consider the following 887-residue polypeptide: UPF0182 protein CTC_00086 (887 aa).

7 helical membrane passes run 9–29 (FIAI…SFII), 47–67 (FFTI…SIWL), 87–107 (LMIA…SSKY), 146–166 (VLIL…YFII), 195–215 (GKQL…GYII), 242–262 (IYRI…ISII), and 266–286 (IKPI…EGAT).

Belongs to the UPF0182 family.

It localises to the cell membrane. In Clostridium tetani (strain Massachusetts / E88), this protein is UPF0182 protein CTC_00086.